A 125-amino-acid chain; its full sequence is N-alpha-acetyltransferase 38, NatC auxiliary subunit (125 aa).

The disordered stretch occupies residues 1-42 (MAGAGPTMLLREENGCCSRRQSSSSAGDSDGEQEDSPATRAR). The residue at position 2 (Ala2) is an N-acetylalanine. Over residues 18–28 (SRRQSSSSAGD) the composition is skewed to low complexity. Phosphoserine is present on residues Ser22, Ser25, and Ser29. The Sm domain occupies 40–118 (RARQQLEALL…IVSIEVQRES (79 aa)).

It belongs to the snRNP Sm proteins family. As to quaternary structure, component of the N-terminal acetyltransferase C (NatC) complex, which is composed of NAA35, NAA38 and NAA30.

Its subcellular location is the cytoplasm. It localises to the nucleus. Auxillary component of the N-terminal acetyltransferase C (NatC) complex which catalyzes acetylation of N-terminal methionine residues. N-terminal acetylation protects proteins from ubiquitination and degradation by the N-end rule pathway. This chain is N-alpha-acetyltransferase 38, NatC auxiliary subunit (Naa38), found in Mus musculus (Mouse).